We begin with the raw amino-acid sequence, 227 residues long: LysM and putative peptidoglycan-binding domain-containing protein 1 (227 aa).

Residues 1 to 11 (MASPSRQPPPG) show a composition bias toward pro residues. The tract at residues 1 to 20 (MASPSRQPPPGGSGLLHGSR) is disordered. Phosphoserine occurs at positions 23 and 33. The 45-residue stretch at 40–84 (LEHQLEPGDTLAGLALKYGVTMEQIKRANRLYTNDSIFLKKTLYI) folds into the LysM domain. The interval 95 to 150 (NGLDSEEEKDGEEEVRPSNDEVWPHSTERKKQETGAGRANGEVFPTPGQETPTPIH) is disordered. Residues 98–107 (DSEEEKDGEE) are compositionally biased toward acidic residues. At Ser-99 the chain carries Phosphoserine. Residues 108–127 (EVRPSNDEVWPHSTERKKQE) show a composition bias toward basic and acidic residues. Phosphoserine is present on residues Ser-166, Ser-181, Ser-194, and Ser-212. The tract at residues 172–196 (AAQKLKKGESGVPGEDAGLHLSSPR) is disordered.

This Macaca fascicularis (Crab-eating macaque) protein is LysM and putative peptidoglycan-binding domain-containing protein 1 (LYSMD1).